A 288-amino-acid chain; its full sequence is Shikimate dehydrogenase (NADP(+)) (288 aa).

Residues 14-16 (SIS) and T63 each bind shikimate. The Proton acceptor role is filled by K67. An NADP(+)-binding site is contributed by E79. Shikimate-binding residues include N88 and D103. NADP(+)-binding positions include 127–131 (GSGGA), 151–156 (NRTYEK), and M219. Y221 lines the shikimate pocket. NADP(+) is bound at residue G242.

Belongs to the shikimate dehydrogenase family. As to quaternary structure, homodimer.

It catalyses the reaction shikimate + NADP(+) = 3-dehydroshikimate + NADPH + H(+). It functions in the pathway metabolic intermediate biosynthesis; chorismate biosynthesis; chorismate from D-erythrose 4-phosphate and phosphoenolpyruvate: step 4/7. Its function is as follows. Involved in the biosynthesis of the chorismate, which leads to the biosynthesis of aromatic amino acids. Catalyzes the reversible NADPH linked reduction of 3-dehydroshikimate (DHSA) to yield shikimate (SA). The sequence is that of Shikimate dehydrogenase (NADP(+)) from Caldicellulosiruptor bescii (strain ATCC BAA-1888 / DSM 6725 / KCTC 15123 / Z-1320) (Anaerocellum thermophilum).